A 530-amino-acid chain; its full sequence is UDP-glucuronosyltransferase 2B15 (530 aa).

An N-terminal signal peptide occupies residues 1 to 23 (MSGKWISALLLLQISFCFKSGNC). N-linked (GlcNAc...) asparagine glycosylation occurs at N316. The helical transmembrane segment at 494–510 (VIGFLLSCVAVTVVLAL) threads the bilayer.

It belongs to the UDP-glycosyltransferase family. In terms of processing, N-glycosylated. In terms of tissue distribution, liver. Lower levels seen in the kidney and testis.

Its subcellular location is the endoplasmic reticulum membrane. It catalyses the reaction glucuronate acceptor + UDP-alpha-D-glucuronate = acceptor beta-D-glucuronoside + UDP + H(+). The catalysed reaction is 17alpha-estradiol + UDP-alpha-D-glucuronate = 17alpha-estradiol 3-O-(beta-D-glucuronate) + UDP + H(+). It carries out the reaction 16alpha,17alpha-estriol + UDP-alpha-D-glucuronate = 16alpha,17alpha-estriol 3-O-(beta-D-glucuronate) + UDP + H(+). The enzyme catalyses 17beta-hydroxy-5alpha-androstan-3-one + UDP-alpha-D-glucuronate = 5alpha-dihydrotestosterone 17-O-(beta-D-glucuronate) + UDP + H(+). UDP-glucuronosyltransferase (UGT) that catalyzes phase II biotransformation reactions in which lipophilic substrates are conjugated with glucuronic acid to increase the metabolite's water solubility, thereby facilitating excretion into either the urine or bile. Essential for the elimination and detoxification of drugs, xenobiotics and endogenous compounds. Catalyzes the glucuronidation of endogenous steroid hormones such as androgens (testosterone, androsterone) and estrogens (estradiol, epiestradiol, estriol, catechol estrogens). Displays glucuronidation activity toward several classes of xenoblotic substrates, including phenolic compounds (eugenol, 4-nitrophenol, 4-hydroxybiphenyl) and phenylpropanoids (naringenin, coumarins). Catalyzes the glucuronidation of monoterpenoid alcohols such as borneol, menthol and isomenthol, a class of natural compounds used in essential oils. In Rattus norvegicus (Rat), this protein is UDP-glucuronosyltransferase 2B15.